The primary structure comprises 656 residues: DNA topoisomerase 3 (656 aa).

The 155-residue stretch at 2 to 156 folds into the Toprim domain; sequence KVLCVAEKNS…QVYRAVFSHL (155 aa). In terms of domain architecture, Topo IA-type catalytic spans 172–635; that stretch reads DMKSVHAVGT…DIVEKYRKYW (464 aa). Tyr-356 (O-(5'-phospho-DNA)-tyrosine intermediate) is an active-site residue.

The protein belongs to the type IA topoisomerase family. As to quaternary structure, forms a complex with SGS1 and RMI1. Interacts with SGS1.

The enzyme catalyses ATP-independent breakage of single-stranded DNA, followed by passage and rejoining.. Its function is as follows. Releases the supercoiling and torsional tension of DNA introduced during the DNA replication and transcription by transiently cleaving and rejoining one strand of the DNA duplex. Introduces a single-strand break via transesterification at a target site in duplex DNA. The scissile phosphodiester is attacked by the catalytic tyrosine of the enzyme, resulting in the formation of a DNA-(5'-phosphotyrosyl)-enzyme intermediate and the expulsion of a 3'-OH DNA strand. The free DNA strand than undergoes passage around the unbroken strand thus removing DNA supercoils. Finally, in the religation step, the DNA 3'-OH attacks the covalent intermediate to expel the active-site tyrosine and restore the DNA phosphodiester backbone. Essential for proper chromosome segregation in both meiosis and mitosis. Weakly relaxes negative supercoils and displays a distinct preference for binding single-stranded DNA. The TOP3-SGS1 protein complex may function as a eukaryotic reverse gyrase introducing positive supercoils into extrachromosomal ribosomal DNA rings. In Saccharomyces cerevisiae (strain ATCC 204508 / S288c) (Baker's yeast), this protein is DNA topoisomerase 3 (TOP3).